Consider the following 480-residue polypeptide: Bifunctional protein GlmU (480 aa).

Positions 1–247 (MATPIDVVIM…AAQVAGVNSP (247 aa)) are pyrophosphorylase. UDP-N-acetyl-alpha-D-glucosamine is bound by residues lysine 24, glutamine 86, 91 to 92 (GT), 113 to 115 (SGD), glycine 150, glutamate 172, and asparagine 245. Position 115 (aspartate 115) interacts with Mg(2+). Asparagine 245 is a Mg(2+) binding site. The linker stretch occupies residues 248-268 (VQLAELERVYQLRQATALMEQ). An N-acetyltransferase region spans residues 269-480 (GVRLADPARF…WKRPVKVSKG (212 aa)). UDP-N-acetyl-alpha-D-glucosamine contacts are provided by arginine 355 and lysine 373. Catalysis depends on histidine 385, which acts as the Proton acceptor. Positions 388 and 399 each coordinate UDP-N-acetyl-alpha-D-glucosamine. Residues alanine 402, 408-409 (NY), serine 427, glycine 445, and arginine 462 each bind acetyl-CoA.

It in the N-terminal section; belongs to the N-acetylglucosamine-1-phosphate uridyltransferase family. This sequence in the C-terminal section; belongs to the transferase hexapeptide repeat family. In terms of assembly, homotrimer. Requires Mg(2+) as cofactor.

Its subcellular location is the cytoplasm. The catalysed reaction is alpha-D-glucosamine 1-phosphate + acetyl-CoA = N-acetyl-alpha-D-glucosamine 1-phosphate + CoA + H(+). The enzyme catalyses N-acetyl-alpha-D-glucosamine 1-phosphate + UTP + H(+) = UDP-N-acetyl-alpha-D-glucosamine + diphosphate. It participates in nucleotide-sugar biosynthesis; UDP-N-acetyl-alpha-D-glucosamine biosynthesis; N-acetyl-alpha-D-glucosamine 1-phosphate from alpha-D-glucosamine 6-phosphate (route II): step 2/2. It functions in the pathway nucleotide-sugar biosynthesis; UDP-N-acetyl-alpha-D-glucosamine biosynthesis; UDP-N-acetyl-alpha-D-glucosamine from N-acetyl-alpha-D-glucosamine 1-phosphate: step 1/1. Its pathway is bacterial outer membrane biogenesis; LPS lipid A biosynthesis. Its function is as follows. Catalyzes the last two sequential reactions in the de novo biosynthetic pathway for UDP-N-acetylglucosamine (UDP-GlcNAc). The C-terminal domain catalyzes the transfer of acetyl group from acetyl coenzyme A to glucosamine-1-phosphate (GlcN-1-P) to produce N-acetylglucosamine-1-phosphate (GlcNAc-1-P), which is converted into UDP-GlcNAc by the transfer of uridine 5-monophosphate (from uridine 5-triphosphate), a reaction catalyzed by the N-terminal domain. In Polaromonas sp. (strain JS666 / ATCC BAA-500), this protein is Bifunctional protein GlmU.